The sequence spans 326 residues: Metallophosphoesterase domain-containing protein 1 (326 aa).

The protein belongs to the UPF0046 family. In terms of tissue distribution, expressed predominantly in adult brain.

Its function is as follows. May have metallophosphoesterase activity (in vitro). The chain is Metallophosphoesterase domain-containing protein 1 (MPPED1) from Homo sapiens (Human).